The primary structure comprises 383 residues: Alkanesulfonate monooxygenase (383 aa).

Belongs to the SsuD family. In terms of assembly, homotetramer.

The catalysed reaction is an alkanesulfonate + FMNH2 + O2 = an aldehyde + FMN + sulfite + H2O + 2 H(+). Functionally, catalyzes the desulfonation of aliphatic sulfonates. In Erwinia pyrifoliae (strain DSM 12163 / CIP 106111 / Ep16/96), this protein is Alkanesulfonate monooxygenase.